Consider the following 853-residue polypeptide: Deubiquitinase otu (853 aa).

The disordered stretch occupies residues 1 to 20; the sequence is MDMQVQRPITSGSRQAPDPY. An OTU domain is found at 29 to 150; it reads LYRKHTARDA…ENHFDSVYDV (122 aa). Residue Asp-37 is part of the active site. The active-site Nucleophile is Ser-40. His-143 is an active-site residue. One can recognise a Tudor domain in the interval 336 to 396; sequence NFKVGAKCKV…HPLPPDEYRP (61 aa). Residues 396–853 are LC domain; the sequence is PWSLPFRYHR…AAVYAATRHH (458 aa). Basic and acidic residues predominate over residues 460–470; that stretch reads QDDEQRDHNDP. 4 disordered regions span residues 460–531, 681–704, 732–794, and 817–853; these read QDDE…YVPM, AVES…LEKS, GPAA…AAQG, and NMDP…TRHH. The span at 499–517 shows a compositional bias: low complexity; that stretch reads SRVQPQNSSSSQNQEVSGS. Polar residues predominate over residues 747-758; it reads NGSQFSFYTTPS. Residues 769 to 778 show a composition bias toward pro residues; the sequence is LLQPPPPPPI. 2 stretches are compositionally biased toward low complexity: residues 783–794 and 820–838; these read AGPPQLGGAAQG and PSAQ…APLS.

As to quaternary structure, self aggregates, forming amyloid-like fibrillar helical structures; protein aggregation is mediated by the C-terminal LC domain, is enhanced by RNA binding and is essential for deubiquitinase activity. Interacts (via OTU domain) with bam (via C-terminus); the interaction enhances otu aggregation and deubiquitinase activity. Together with bam interacts with CycA/cyclin-A; the interaction stabilizes CycA by promoting its deubiquitination. Together with bam interacts with Traf6. Interacts with Hrb27C; the interaction is RNA-independent. Associates (via N-terminus) with mRNP complexes; the interaction is weak. As to expression, expressed at high levels in the ovary, at low levels in the brain and fat body, and at moderate levels in the gut.

It localises to the cytoplasm. It is found in the cell cortex. Its subcellular location is the perinuclear region. Its activity is regulated as follows. Activated by protein aggregation, which is mediated by the LC domain and enhanced by RNA binding. In terms of biological role, catalytic component of a deubiquitinase complex consisting of bam and otu. The complex deubiquitinates K63-linked polyubiquitinated proteins; this antagonizes the ubiquitination activity of Traf6 and regulates the IMD immune signaling pathway. Otu-bam deubiquitinase activity is regulated by Traf6 dependent immune signaling regulation of bam expression levels; this forms a feedback loop that regulates the IMD immune signaling pathway and balances gut immune activity during aging. The complex deubiquitinates and stabilizes CycA/cyclin-A to regulate CycA-dependent differentiation. Involved in grk mRNA localization to the dorsal anterior region of the oocyte required for dorsal-ventral axis determination; may function as a ribonuclear protein complex together with sqd and Hrb27C. May regulate actin cytoskeleton organization in differentiating cystocytes during fusome maturation; required for efficient nurse cell cytoplasmic dumping during oogenesis. Essential for female fertility; involved in germ cell proliferation and germ cell differentiation. Involved in the early stages of germ cell proliferation and differentiation during oogenesis. Required for polytene chromosome dispersal in nurse cells during oogenesis. Functionally, involved in the later stages of germ cell proliferation and differentiation during oogenesis. This is Deubiquitinase otu from Drosophila melanogaster (Fruit fly).